The chain runs to 106 residues: Immunoglobulin lambda constant 3 (106 aa).

Positions 7 to 101 (PSVTLFPPSS…EGSTVEKTVA (95 aa)) constitute an Ig-like domain. Cysteine 28 and cysteine 87 are oxidised to a cystine.

In terms of assembly, immunoglobulins are composed of two identical heavy chains and two identical light chains; disulfide-linked.

The protein resides in the secreted. The protein localises to the cell membrane. Constant region of immunoglobulin light chains. Immunoglobulins, also known as antibodies, are membrane-bound or secreted glycoproteins produced by B lymphocytes. In the recognition phase of humoral immunity, the membrane-bound immunoglobulins serve as receptors which, upon binding of a specific antigen, trigger the clonal expansion and differentiation of B lymphocytes into immunoglobulins-secreting plasma cells. Secreted immunoglobulins mediate the effector phase of humoral immunity, which results in the elimination of bound antigens. The antigen binding site is formed by the variable domain of one heavy chain, together with that of its associated light chain. Thus, each immunoglobulin has two antigen binding sites with remarkable affinity for a particular antigen. The variable domains are assembled by a process called V-(D)-J rearrangement and can then be subjected to somatic hypermutations which, after exposure to antigen and selection, allow affinity maturation for a particular antigen. In Homo sapiens (Human), this protein is Immunoglobulin lambda constant 3.